Here is a 266-residue protein sequence, read N- to C-terminus: Maltodextrose utilization protein MalA (266 aa).

Functionally, has a role in maltotetraose utilization. This Streptococcus pneumoniae (strain ATCC BAA-255 / R6) protein is Maltodextrose utilization protein MalA (malA).